The sequence spans 1205 residues: MDPPAGAAGRLLCPALLLLLLLPLPADARLAAAAADPPGGPQGHGAERILAVPVRTDAQGRLVSHVVSAATAPAGVRTRRAAPAQIPGLSGGSEEDPGGRLFYNVTVFGRDLHLRLRPNARLVAPGATVEWQGESGATRVEPLLGTCLYVGDVAGLAESSSVALSNCDGLAGLIRMEEEEFFIEPLEKGLAAKEAEQGRVHVVYHRPTTSRPPPLGGPQALDTGISADSLDSLSRALGVLEERVNSSRRRMRRHAADDDYNIEVLLGVDDSVVQFHGTEHVQKYLLTLMNIVNEIYHDESLGAHINVVLVRIILLSYGKSMSLIEIGNPSQSLENVCRWAYLQQKPDTDHDEYHDHAIFLTRQDFGPSGMQGYAPVTGMCHPVRSCTLNHEDGFSSAFVVAHETGHVLGMEHDGQGNRCGDEVRLGSIMAPLVQAAFHRFHWSRCSQQELSRYLHSYDCLRDDPFTHDWPALPQLPGLHYSMNEQCRFDFGLGYMMCTAFRTFDPCKQLWCSHPDNPYFCKTKKGPPLDGTMCAPGKHCFKGHCIWLTPDILKRDGNWGAWSPFGSCSRTCGTGVKFRTRQCDNPHPANGGRTCSGLAYDFQLCNSQDCPDALADFREEQCRQWDLYFEHGDAQHHWLPHEHRDAKERCHLYCESKETGEVVSMKRMVHDGTRCSYKDAFSLCVRGDCRKVGCDGVIGSSKQEDKCGVCGGDNSHCKVVKGTFSRSPKKLGYIKMFEIPAGARHLLIQEADTTSHHLAVKNLETGKFILNEENDVDPNSKTFIAMGVEWEYRDEDGRETLQTMGPLHGTITVLVIPEGDARISLTYKYMIHEDSLNVDDNNVLEDDSVGYEWALKKWSPCSKPCGGGSQFTKYGCRRRLDHKMVHRGFCDSVSKPKAIRRTCNPQECSQPVWVTGEWEPCSRSCGRTGMQVRSVRCVQPLHNNTTRSVHTKHCNDARPEGRRACNRELCPGRWRAGSWSQCSVTCGNGTQERPVLCRTADDSFGVCREERPETARICRLGPCPRNTSDPSKKSYVVQWLSRPDPNSPVQETSSKGRCQGDKSVFCRMEVLSRYCSIPGYNKLCCKSCNPHDNLTDVDDRAEPPSGKHNDIEELMPTLSVPTLVMEVQPPPGIPLEVPLNTSSTNATEDHPETNAVDVPYKIPGLEDEVQPPNLIPRRPSPYEKTRNQRIQELIDEMRKKEMLGKF.

Positions 1–28 are cleaved as a signal peptide; the sequence is MDPPAGAAGRLLCPALLLLLLLPLPADA. The propeptide occupies 29–253; the sequence is RLAAAAADPP…VNSSRRRMRR (225 aa). 2 N-linked (GlcNAc...) asparagine glycosylation sites follow: Asn-104 and Asn-245. Residues 260–464 enclose the Peptidase M12B domain; that stretch reads YNIEVLLGVD…HSYDCLRDDP (205 aa). 10 disulfide bridges follow: Cys-337–Cys-386, Cys-380–Cys-459, Cys-419–Cys-445, Cys-486–Cys-511, Cys-497–Cys-520, Cys-506–Cys-539, Cys-533–Cys-544, Cys-567–Cys-604, Cys-571–Cys-609, and Cys-582–Cys-594. Position 402 (His-402) interacts with Zn(2+). Residue Glu-403 is part of the active site. The Zn(2+) site is built by His-406 and His-412. The Disintegrin domain maps to 474 to 554; it reads QLPGLHYSMN…IWLTPDILKR (81 aa). Residues 555–610 enclose the TSP type-1 1 domain; sequence DGNWGAWSPFGSCSRTCGTGVKFRTRQCDNPHPANGGRTCSGLAYDFQLCNSQDCP. Residues 685–687 carry the Cell attachment site motif; it reads RGD. Residues 717–845 form a spacer region; sequence KVVKGTFSRS…NVDDNNVLED (129 aa). 3 consecutive TSP type-1 domains span residues 848 to 906, 908 to 968, and 969 to 1023; these read VGYE…NPQE, SQPV…NREL, and CPGR…GPCP. N-linked (GlcNAc...) asparagine glycans are attached at residues Asn-942, Asn-943, and Asn-987. 3 disulfides stabilise this stretch: Cys-981–Cys-1017, Cys-985–Cys-1022, and Cys-996–Cys-1006. A glycan (N-linked (GlcNAc...) asparagine) is linked at Asn-1025. The 39-residue stretch at 1053 to 1091 folds into the PLAC domain; the sequence is SKGRCQGDKSVFCRMEVLSRYCSIPGYNKLCCKSCNPHD. 3 N-linked (GlcNAc...) asparagine glycosylation sites follow: Asn-1092, Asn-1139, and Asn-1144. Residues 1163 to 1184 form a disordered region; that stretch reads GLEDEVQPPNLIPRRPSPYEKT.

As to quaternary structure, may belong to a multimeric complex. Binds specifically to collagen type XIV. The cofactor is Zn(2+). The N-terminus is blocked. In terms of processing, the precursor is cleaved by a furin endopeptidase. Post-translationally, glycosylated. Can be O-fucosylated by POFUT2 on a serine or a threonine residue found within the consensus sequence C1-X(2)-(S/T)-C2-G of the TSP type-1 repeat domains where C1 and C2 are the first and second cysteine residue of the repeat, respectively. Fucosylated repeats can then be further glycosylated by the addition of a beta-1,3-glucose residue by the glucosyltransferase, B3GALTL. Fucosylation mediates the efficient secretion of ADAMTS family members. Can also be C-glycosylated with one or two mannose molecules on tryptophan residues within the consensus sequence W-X-X-W of the TPRs, and N-glycosylated. These other glycosylations can also facilitate secretion. Enzymatic activity is detected at high level in all type I collagen-rich tissues such as skin, bones, tendons and aorta and at low level in brain and thymus. The mRNA levels were disproportionately high in heart, liver, retina and muscle.

It localises to the secreted. The protein resides in the extracellular space. The protein localises to the extracellular matrix. It carries out the reaction Cleaves the N-propeptide of collagen chain alpha1(I) at Pro-|-Gln and of alpha1(II) and alpha2(I) at Ala-|-Gln.. Its function is as follows. Cleaves the propeptides of type I and II collagen prior to fibril assembly. Does not act on type III collagen. Cleaves lysyl oxidase LOX at a site downstream of its propeptide cleavage site to produce a short LOX form with reduced collagen-binding activity. This chain is A disintegrin and metalloproteinase with thrombospondin motifs 2 (ADAMTS2), found in Bos taurus (Bovine).